Here is a 249-residue protein sequence, read N- to C-terminus: 6-phosphogluconolactonase 3 (249 aa).

It belongs to the glucosamine/galactosamine-6-phosphate isomerase family. 6-phosphogluconolactonase subfamily.

Its subcellular location is the cytoplasm. The protein localises to the nucleus. The catalysed reaction is 6-phospho-D-glucono-1,5-lactone + H2O = 6-phospho-D-gluconate + H(+). It participates in carbohydrate degradation; pentose phosphate pathway; D-ribulose 5-phosphate from D-glucose 6-phosphate (oxidative stage): step 2/3. Hydrolysis of 6-phosphogluconolactone to 6-phosphogluconate. This Saccharomyces cerevisiae (strain RM11-1a) (Baker's yeast) protein is 6-phosphogluconolactonase 3 (SOL3).